The chain runs to 304 residues: MADYHNNYKKNDELEFVRTGYGKDMVKVLHIQRDGKYHSIKEVATSVQLTLSSKKDYLHGDNSDIIPTDTIKNTVHVLAKFKGIKSIEAFGVNICEYFLSSFNHVIRAQVYVEEIPWKRLEKNGVKHVHAFIHTPTGTHFCEVEQLRSGPPVIHSGIKDLKVLKTTQSGFEGFIKDQFTTLPEVKDRCFATQVYCKWRYHQCRDVDFEATWGTIRDLVLEKFAGPYDKGEYSPSVQKTLYDIQVLSLSRVPEIEDMEISLPNIHYFNIDMSKMGLINKEEVLLPLDNPYGKITGTVKRKLSSRL.

Position 2 is an N-acetylalanine (A2). Residues K10 and K23 each carry the N6-acetyllysine; alternate modification. N6-succinyllysine; alternate occurs at positions 10 and 23. K23 acts as the Charge relay system in catalysis. Residues K27 and K36 each carry the N6-acetyllysine modification. Phosphoserine occurs at positions 39 and 63. T68 acts as the Charge relay system in catalysis. Urate contacts are provided by T68 and D69. An N6-acetyllysine mark is found at K118, K122, and K164. Urate is bound at residue F170. Residues K175 and K185 each carry the N6-acetyllysine modification. R187 is a urate binding site. N6-acetyllysine; alternate is present on residues K221 and K228. N6-succinyllysine; alternate occurs at positions 221 and 228. Position 232 is a phosphoserine (S232). Residues V235, Q236, and N262 each coordinate urate. The active-site Charge relay system is the H264. The residue at position 278 (K278) is an N6-acetyllysine. Y289 carries the post-translational modification Phosphotyrosine. Residues 302–304 carry the Microbody targeting signal motif; sequence SRL.

This sequence belongs to the uricase family.

The protein resides in the peroxisome. It catalyses the reaction urate + O2 + H2O = 5-hydroxyisourate + H2O2. Its pathway is purine metabolism; urate degradation; (S)-allantoin from urate: step 1/3. Catalyzes the oxidation of uric acid to 5-hydroxyisourate, which is further processed to form (S)-allantoin. The polypeptide is Uricase (UOX) (Macaca fascicularis (Crab-eating macaque)).